Here is a 280-residue protein sequence, read N- to C-terminus: Nitrogenase iron-iron protein alpha chain (280 aa).

Positions 5, 31, and 94 each coordinate [8Fe-7S] cluster. Residue Cys-213 participates in [8Fe-9S-C-homocitryl] cluster binding.

It belongs to the NifD/NifK/NifE/NifN family. In terms of assembly, hexamer of two alpha, two beta, and two delta chains. [8Fe-7S] cluster serves as cofactor. The cofactor is [8Fe-9S-C-homocitryl] cluster.

It carries out the reaction N2 + 8 reduced [2Fe-2S]-[ferredoxin] + 16 ATP + 16 H2O = H2 + 8 oxidized [2Fe-2S]-[ferredoxin] + 2 NH4(+) + 16 ADP + 16 phosphate + 6 H(+). Its function is as follows. This iron-iron protein is part of the nitrogenase complex that catalyzes the key enzymatic reactions in nitrogen fixation. Other nitrogenase complexes utilize a molybdenum-iron protein or a vanadium-iron protein. The polypeptide is Nitrogenase iron-iron protein alpha chain (anfD) (Heliomicrobium gestii (Heliobacterium gestii)).